Here is a 120-residue protein sequence, read N- to C-terminus: MRHRKSGAKLNRTSSHRKAMFRNMVTSLFKHSSIKTTEAKAKELRKLADKMVTLAKRGDLHARRQAFSIIREKDVVHQLFNDAPSKFASRQGGYTRITKLGLRSGDAAPMTTIELICDEV.

It belongs to the bacterial ribosomal protein bL17 family. In terms of assembly, part of the 50S ribosomal subunit. Contacts protein L32.

The sequence is that of Large ribosomal subunit protein bL17 from Desulforapulum autotrophicum (strain ATCC 43914 / DSM 3382 / VKM B-1955 / HRM2) (Desulfobacterium autotrophicum).